Here is a 470-residue protein sequence, read N- to C-terminus: ATP synthase subunit beta (470 aa).

Position 155–162 (155–162) interacts with ATP; the sequence is GGAGVGKT.

Belongs to the ATPase alpha/beta chains family. In terms of assembly, F-type ATPases have 2 components, CF(1) - the catalytic core - and CF(0) - the membrane proton channel. CF(1) has five subunits: alpha(3), beta(3), gamma(1), delta(1), epsilon(1). CF(0) has three main subunits: a(1), b(2) and c(9-12). The alpha and beta chains form an alternating ring which encloses part of the gamma chain. CF(1) is attached to CF(0) by a central stalk formed by the gamma and epsilon chains, while a peripheral stalk is formed by the delta and b chains.

Its subcellular location is the cell membrane. It carries out the reaction ATP + H2O + 4 H(+)(in) = ADP + phosphate + 5 H(+)(out). Functionally, produces ATP from ADP in the presence of a proton gradient across the membrane. The catalytic sites are hosted primarily by the beta subunits. The sequence is that of ATP synthase subunit beta from Pectinatus frisingensis.